The chain runs to 4857 residues: Dual E2 ubiquitin-conjugating enzyme/E3 ubiquitin-protein ligase BIRC6 (4857 aa).

WD repeat units follow at residues 68–106 and 107–136; these read DGLHSLSYHPALNAILAVTSRGTIKVIDGTSGATLQASA and LSAKPGGQVKCQYISAVDKVIFVDDYAVGC. Residues 268 to 377 form a BIR repeat; that stretch reads PELGVGPGRS…LSVTLATSPA (110 aa). Zn(2+)-binding residues include C328, C331, H348, and C355. Residues 379-426 form a WD 3 repeat; it reads FPCTDGTDRISCFGSGSCPHFLAAATKRGKICIWDVSKLMKVHLKFEI. 2 disordered regions span residues 465-498 and 579-618; these read DIPKLEGDSDDLLEDSDSEEHSRSDSVTGHTSQK and ATSPISSNSHRSLDGLSRTQGESISEQGSTDNESCTNSEL. Over residues 472–482 the composition is skewed to acidic residues; sequence DSDDLLEDSDS. Residues S473, S480, S482, S581, and S590 each carry the phosphoserine modification. WD repeat units lie at residues 501–720, 730–850, 851–927, and 928–966; these read MEVS…VQCL, NLCI…QHIK, DPQD…AKVE, and PPKKEGTEEQDTFVSVIYCSGTDRLCACTKGGELHFLQI. Residues 579–588 are compositionally biased toward polar residues; it reads ATSPISSNSH. Positions 595-618 are enriched in polar residues; that stretch reads SRTQGESISEQGSTDNESCTNSEL. Disordered regions lie at residues 984 to 1004 and 1053 to 1073; these read LSKGIEPSSEGSKPLSNPSSP and QQQRRHPQHLHQQHHGDAAQH. The span at 992–1004 shows a compositional bias: polar residues; that stretch reads SEGSKPLSNPSSP. Residues 1056-1065 show a composition bias toward basic residues; the sequence is RRHPQHLHQQ. T1710 is modified (phosphothreonine). 2 positions are modified to phosphoserine: S2222 and S2955. The segment at 2945–2973 is disordered; the sequence is SVTTNTTDSVSDEEKVSGGKDGNGSSTSV. The HRRAR loop; important for DIABLO/SMAC and HTRA2 binding stretch occupies residues 3189–3193; that stretch reads HRRAR. Residues 3819-4068 form the Ubiquitin-like domain; the sequence is DEKVTMFLQS…ESLLETCPIQ (250 aa). A disordered region spans residues 3923-3949; sequence QSKRAVSATPPRPPSRRGRTIPDKIGS. Position 3931 is a phosphothreonine (T3931). Residue S4023 is modified to Phosphoserine. Positions 4260-4283 are disordered; that stretch reads RVPNSSVNQTEPQVSSSHNPTSTE. Over residues 4261–4283 the composition is skewed to polar residues; it reads VPNSSVNQTEPQVSSSHNPTSTE. One can recognise a UBC core domain in the interval 4573-4740; it reads ARARRLAQEA…IRQATVKWAM (168 aa). C4666 serves as the catalytic Glycyl thioester intermediate. The tract at residues 4835–4857 is disordered; that stretch reads EETLMHDQVKPSSSKELPSDFQL. The span at 4844-4857 shows a compositional bias: polar residues; it reads KPSSSKELPSDFQL.

It belongs to the BIRC6 family. In terms of assembly, homodimer; antiparallel. Interacts with RNF41. Interacts with DIABLO/SMAC, likely with higher affinity to SMAC dimer than SMAC monomer; this interaction blocks the substrate-binding site and inhibits the caspase inhibition activity of BIRC6. Interacts with KIF23/MKLP1, USP8/UBPY, BIRC5/survivin, MAP2K1/MEK1, RAB8A/RAB8, RAB11A/RAB11, PLK1, EXOC3/SEC6 and EXOC4/SEC8. Post-translationally, ubiquitinated; mediated by RNF41 E3 ligase and leads to proteasomal degradation, impairing inhibition of apoptosis. Deubiquitinated by USP8/UBPY. Autoubiquitinated; mediated by E1 ubiquitin activating enzyme UBA6. Proteolytically cleaved. Acts as substrate for CASP3, CASP6, CASP7, CASP9 and HTRA2. In terms of tissue distribution, expressed in brain cancer cells.

The protein resides in the golgi apparatus. Its subcellular location is the trans-Golgi network membrane. It is found in the endosome. The protein localises to the cytoplasm. It localises to the cytoskeleton. The protein resides in the spindle pole. Its subcellular location is the microtubule organizing center. It is found in the centrosome. The protein localises to the midbody. It localises to the midbody ring. It catalyses the reaction S-ubiquitinyl-[E1 ubiquitin-activating enzyme]-L-cysteine + [acceptor protein]-L-lysine = [E1 ubiquitin-activating enzyme]-L-cysteine + N(6)-monoubiquitinyl-[acceptor protein]-L-lysine.. Its activity is regulated as follows. Inhibited by DIABLO/SMAC, which competes for the substrate-binding sites on BIRC6. BIRC6 inhibits caspases and protease by ubiquitination but BIRC6 itself is subjected to protease cleavage by CASP3, CASP6, CASP7, CASP9 and HTRA2 by protease cleavage. Functionally, anti-apoptotic protein known as inhibitor of apoptosis (IAP) which can regulate cell death by controlling caspases and by acting as an E3 ubiquitin-protein ligase. Unlike most IAPs, does not contain a RING domain and it is not a RING-type E3 ligase. Instead acts as a dual E2/E3 enzyme that combines ubiquitin conjugating (E2) and ubiquitin ligase (E3) activities in a single polypeptide. Ubiquitination is mediated by a non-canonical E1 ubiquitin activating enzyme UBA6. Ubiquitinates CASP3, CASP7 and CASP9 and inhibits their caspase activity; also ubiquitinates their procaspases but to a weaker extent. Ubiquitinates pro-apoptotic factors DIABLO/SMAC and HTRA2. DIABLO/SMAC antagonizes the caspase inhibition activity of BIRC6 by competing for the same binding sites as the caspases. Ubiquitinates the autophagy protein MAP1LC3B; this activity is also inhibited by DIABLO/SMAC. Important regulator for the final stages of cytokinesis. Crucial for normal vesicle targeting to the site of abscission, but also for the integrity of the midbody and the midbody ring, and its striking ubiquitin modification. This is Dual E2 ubiquitin-conjugating enzyme/E3 ubiquitin-protein ligase BIRC6 (BIRC6) from Homo sapiens (Human).